A 212-amino-acid polypeptide reads, in one-letter code: Imidazole glycerol phosphate synthase subunit HisH (212 aa).

A Glutamine amidotransferase type-1 domain is found at 1-212 (MLAILDYKAG…YEYCKEVSDA (212 aa)). The active-site Nucleophile is C79. Active-site residues include H187 and E189.

Heterodimer of HisH and HisF.

The protein resides in the cytoplasm. It carries out the reaction 5-[(5-phospho-1-deoxy-D-ribulos-1-ylimino)methylamino]-1-(5-phospho-beta-D-ribosyl)imidazole-4-carboxamide + L-glutamine = D-erythro-1-(imidazol-4-yl)glycerol 3-phosphate + 5-amino-1-(5-phospho-beta-D-ribosyl)imidazole-4-carboxamide + L-glutamate + H(+). The enzyme catalyses L-glutamine + H2O = L-glutamate + NH4(+). It functions in the pathway amino-acid biosynthesis; L-histidine biosynthesis; L-histidine from 5-phospho-alpha-D-ribose 1-diphosphate: step 5/9. Its function is as follows. IGPS catalyzes the conversion of PRFAR and glutamine to IGP, AICAR and glutamate. The HisH subunit catalyzes the hydrolysis of glutamine to glutamate and ammonia as part of the synthesis of IGP and AICAR. The resulting ammonia molecule is channeled to the active site of HisF. This chain is Imidazole glycerol phosphate synthase subunit HisH, found in Maridesulfovibrio salexigens (strain ATCC 14822 / DSM 2638 / NCIMB 8403 / VKM B-1763) (Desulfovibrio salexigens).